A 199-amino-acid chain; its full sequence is Putative HMP/thiamine permease protein YkoE (199 aa).

Transmembrane regions (helical) follow at residues 9–29 (IVIM…FTHF), 40–60 (IAYE…AYMI), 63–83 (PGAA…LGNP), 85–105 (GPMV…VFLA), 114–134 (PVLM…DLFV), and 143–163 (GYLL…AGLL).

The complex is composed of two ATP-binding proteins (YkoD), two transmembrane proteins (YkoC and YkoE) and a solute-binding protein (YkoF).

The protein resides in the cell membrane. Part of the ABC transporter complex YkoCDEF that could transport hydroxymethylpyrimidine (HMP) and/or thiamine. Could also transport other HMP-containing products. Probably responsible for the translocation of the substrate across the membrane. The chain is Putative HMP/thiamine permease protein YkoE (ykoE) from Bacillus subtilis (strain 168).